Consider the following 898-residue polypeptide: Nitrate reductase [NAD(P)H] (898 aa).

A compositionally biased stretch (basic and acidic residues) spans 1–15 (MAASVENRRFTHHEP). The interval 1–65 (MAASVENRRF…SSSEDENEND (65 aa)) is disordered. Position 180 (C180) interacts with Mo-molybdopterin. One can recognise a Cytochrome b5 heme-binding domain in the interval 528–603 (SKMFSMSEVK…LEDYRIGELI (76 aa)). The heme site is built by H563 and H586. The FAD-binding FR-type domain maps to 642–754 (GAKIPTKLVY…KGPLGHVEYT (113 aa)). Residues 694-697 (RAYT), 711-715 (VVKIY), F716, F723, 728-730 (LMS), and T781 each bind FAD.

It belongs to the nitrate reductase family. In terms of assembly, homodimer. FAD serves as cofactor. Heme is required as a cofactor. It depends on Mo-molybdopterin as a cofactor.

The enzyme catalyses nitrite + NAD(+) + H2O = nitrate + NADH + H(+). It carries out the reaction nitrite + NADP(+) + H2O = nitrate + NADPH + H(+). Functionally, nitrate reductase is a key enzyme involved in the first step of nitrate assimilation in plants, fungi and bacteria. The polypeptide is Nitrate reductase [NAD(P)H] (NIA1) (Betula pendula (European white birch)).